The following is a 314-amino-acid chain: Beta-lactamase (314 aa).

A signal peptide (tat-type signal) is located at residues 1 to 39 (MHPSTSRPSRRTLLTATAGAALAAATLVPGTAHASSGGR). A disordered region spans residues 31 to 50 (TAHASSGGRGHGSGSVSDAE). Ser89 acts as the Acyl-ester intermediate in catalysis. 259–261 (KTG) provides a ligand contact to substrate.

The protein belongs to the class-A beta-lactamase family. Predicted to be exported by the Tat system. The position of the signal peptide cleavage has been experimentally proven.

It catalyses the reaction a beta-lactam + H2O = a substituted beta-amino acid. In Streptomyces albus G, this protein is Beta-lactamase.